A 639-amino-acid polypeptide reads, in one-letter code: ATP-dependent zinc metalloprotease FtsH (639 aa).

Residues 1 to 15 (MDNEKQASPPPAAPP) are Cytoplasmic-facing. A helical membrane pass occupies residues 16 to 36 (LNWRYLLWIILLGIFLISWLG). Residues 37–123 (NAGRQAGDEI…VQAKSEEPSL (87 aa)) are Periplasmic-facing. The chain crosses the membrane as a helical span at residues 124–144 (WMQAIIGILPWFLILGLIFYV). The Cytoplasmic segment spans residues 145-639 (SYRMQQRMMG…HNEAVATGAG (495 aa)). ATP is bound at residue 221–228 (GRPGTGKT). His-442 is a Zn(2+) binding site. Glu-443 is an active-site residue. 2 residues coordinate Zn(2+): His-446 and Asp-518.

In the central section; belongs to the AAA ATPase family. This sequence in the C-terminal section; belongs to the peptidase M41 family. Homohexamer. Zn(2+) is required as a cofactor.

It localises to the cell inner membrane. Functionally, acts as a processive, ATP-dependent zinc metallopeptidase for both cytoplasmic and membrane proteins. Plays a role in the quality control of integral membrane proteins. This Nitrosococcus oceani (strain ATCC 19707 / BCRC 17464 / JCM 30415 / NCIMB 11848 / C-107) protein is ATP-dependent zinc metalloprotease FtsH.